Consider the following 122-residue polypeptide: Large ribosomal subunit protein uL14 (122 aa).

The protein belongs to the universal ribosomal protein uL14 family. As to quaternary structure, part of the 50S ribosomal subunit. Forms a cluster with proteins L3 and L19. In the 70S ribosome, L14 and L19 interact and together make contacts with the 16S rRNA in bridges B5 and B8.

Functionally, binds to 23S rRNA. Forms part of two intersubunit bridges in the 70S ribosome. The polypeptide is Large ribosomal subunit protein uL14 (Campylobacter concisus (strain 13826)).